The following is a 500-amino-acid chain: MATIWFLSLLFLCCILLAAFKHKKRRTNQQQPPSPPGFPIIGNLHQLGELPHQSLWSLSKTYGPVMLLKLGSVPTVVVSSSETAKQVLKINDLHCCSRPSLAGAKELSYNYLDIAFSPFDDYWKELRRICVQELFSAKRVHSIQPIKEEEVRKLIVSATESASQKSPVNLSEKFLDLTVSVICKAAFSLDFHTSVLNNDGFDKLIHDAFLFLGSFSASNFFPNGGWIIDWLTGLQRRREKSVKDLDVFYQQMFDLHKQENKQGVEDFVDLLLKLEKEETVLGYGKLTRNHVKAILMNVLLGAINTSAMTMTWAMAELIRNPRVMKKVQSEIRNQMINKSVITLDDIDHLPYLKMVIKETWRLHPPVPLLLPREVMSEFEINGYKIQPKTLLYVNVWAIGRDPDSWKDADMFYPERFMDNNIDAKGQNFELLPFGSGRRICPGMYMGTTMVEFGLANMLYQFDWEVPDGMVVEDIDMEESPGLAVGKKNELLLVPVKYLGH.

The helical transmembrane segment at 1-21 threads the bilayer; it reads MATIWFLSLLFLCCILLAAFK. Cys-440 serves as a coordination point for heme.

The protein belongs to the cytochrome P450 family. The cofactor is heme.

It is found in the membrane. The protein is Cytochrome P450 71B9 (CYP71B9) of Arabidopsis thaliana (Mouse-ear cress).